The sequence spans 378 residues: C-X-C chemokine receptor type 3-2 (378 aa).

The Extracellular segment spans residues 1-47; that stretch reads MDNSTTAAEVSAPTDYDYNSTSYDDDNPYAAPCSLTETWNFLGRFAP. 2 N-linked (GlcNAc...) asparagine glycosylation sites follow: asparagine 3 and asparagine 19. A helical membrane pass occupies residues 48–68; that stretch reads VAYILVFILALVGNILVLCVI. Topologically, residues 69–86 are cytoplasmic; it reads RRYRQSRHSPCSFSLTDT. The helical transmembrane segment at 87–107 threads the bilayer; the sequence is FLLHLAVSDLLLAATLPFFAV. Topologically, residues 108 to 121 are extracellular; it reads EWISEWVFGKVMCK. The cysteines at positions 120 and 199 are disulfide-linked. Residues 122-142 traverse the membrane as a helical segment; that stretch reads ITGALFSLNVYCGVLFLACIS. Over 143 to 164 the chain is Cytoplasmic; it reads FDRYLAIVHAINISWRRKTCHA. A helical transmembrane segment spans residues 165-185; it reads QLACAFIWVICLGLSMVDMHF. Residues 186 to 212 lie on the Extracellular side of the membrane; sequence RDLVEIPGMNRMVCQIVYSEQYSKQWQ. The helical transmembrane segment at 213–233 threads the bilayer; it reads IGMQLVSMVLGFILPLLVMLY. Residues 234-253 lie on the Cytoplasmic side of the membrane; the sequence is CYLHIFKALCHATRRQKRRS. The helical transmembrane segment at 254–274 threads the bilayer; the sequence is LRLIISLVIVFVISWAPYNAL. Over 275–304 the chain is Extracellular; it reads RMTDSLQMLGVIVKSCALNNVLDVGILVTE. The chain crosses the membrane as a helical span at residues 305-325; it reads SLGLAHCALNPLLYGLVGVKF. Residues 326–378 lie on the Cytoplasmic side of the membrane; that stretch reads RRELAQMCKAALGPQGCLGLVGWANGRGSSTRRPTGSFSSVETENTSYFSVMA.

This sequence belongs to the G-protein coupled receptor 1 family.

The protein resides in the cell membrane. In terms of biological role, receptor for the C-X-C chemokines cxcl11.1 and cxcl11.6. Promotes macrophage chemotaxis to sites of bacterial infection. This Danio rerio (Zebrafish) protein is C-X-C chemokine receptor type 3-2.